The following is a 713-amino-acid chain: Glycine--tRNA ligase beta subunit (713 aa).

The protein belongs to the class-II aminoacyl-tRNA synthetase family. In terms of assembly, tetramer of two alpha and two beta subunits.

The protein localises to the cytoplasm. The enzyme catalyses tRNA(Gly) + glycine + ATP = glycyl-tRNA(Gly) + AMP + diphosphate. The polypeptide is Glycine--tRNA ligase beta subunit (Picosynechococcus sp. (strain ATCC 27264 / PCC 7002 / PR-6) (Agmenellum quadruplicatum)).